A 335-amino-acid chain; its full sequence is Tetraacyldisaccharide 4'-kinase (335 aa).

58-65 lines the ATP pocket; sequence TVGGSGKT.

Belongs to the LpxK family.

It catalyses the reaction a lipid A disaccharide + ATP = a lipid IVA + ADP + H(+). Its pathway is glycolipid biosynthesis; lipid IV(A) biosynthesis; lipid IV(A) from (3R)-3-hydroxytetradecanoyl-[acyl-carrier-protein] and UDP-N-acetyl-alpha-D-glucosamine: step 6/6. Transfers the gamma-phosphate of ATP to the 4'-position of a tetraacyldisaccharide 1-phosphate intermediate (termed DS-1-P) to form tetraacyldisaccharide 1,4'-bis-phosphate (lipid IVA). This chain is Tetraacyldisaccharide 4'-kinase, found in Shewanella sp. (strain MR-7).